An 847-amino-acid chain; its full sequence is MHLLGPWLLLLVLEYLAFSDSSKWAFEHPETLYAWEGACVWIPCTYRALDRDLESFILFHNPEYNKNTSKFDGTRLYESTKDGKVPSEQKRVQFLGDKNKNCTLSIHPVHVNDSGQLGLRMESKTAKWMERIHLNVSERPFPPHIQLPPEIQESQEVTLTCLLNFSCYGYPIQLQWLLEGVPMRQAAVTSTSLTIKSVFTRSELKFSPQWSHHGKIVTCQLQDADGKFLSNDTVQLNVKHTPKLEIKVTPSDAIVREGESVTMTCEVSSSNPEYTTISWLKDGTSLKKQNTLMLNLHEVTKDQSGKYCCQVSNDVGPGRSAEVFLQVQYAPEPSTVQILHSPAVEGSQVEFLCMSLANPLPTNYTWYHNGKEMQGRTEEKVHIPKILPWHAGTYSCVAENILGTGQRGPGAELDVQYPPKKVTTVIQNPTPIREGDTVTLSCNYNSSNPSVTRYEWKPHGAWEEPSLGVLKIQNVGWGNTTIACAACNSWCSWASPVALNVQYAPRDVRVRKIKPLSEIHSGNSVSLQCDFSSSHPKEVQFFWEKNGRLLGKESRLNFDSISPEDAGSYSCWVNNSIGQTASKAWTLEVLYAPRRLRVSMSPGDQVMEGKSATLTCESDANPPVSHYTWFDWNNQSLPYHSQKLRLEPVKVQHSGAYWCQGTNSVGKGHSPLSTLTVYYSPETIGRRVAVGFGSCLAILILAICGLKLQRRWKRTQSQQGLQENSSGQSFFVRNKKVRRAPLSEGPHSLGYYNPMMEDGISYTTLRFPETNIPRTGDAETSEMQSPPPDCDDTVTYSVLHKRQMGDYENVIPDFSEDEGIHYSELIQFGVGERPQAQENVDYVILKH.

A signal peptide spans 1–19; sequence MHLLGPWLLLLVLEYLAFS. Residues 20–138 form the Ig-like V-type domain; sequence DSSKWAFEHP…MERIHLNVSE (119 aa). Topologically, residues 20–687 are extracellular; that stretch reads DSSKWAFEHP…YYSPETIGRR (668 aa). 3 N-linked (GlcNAc...) asparagine glycosylation sites follow: asparagine 67, asparagine 101, and asparagine 112. Arginine 120 contributes to the N-acetylneuraminate binding site. N-linked (GlcNAc...) asparagine glycans are attached at residues asparagine 135, asparagine 164, and asparagine 231. 6 Ig-like C2-type domains span residues 143-235, 242-326, 331-416, 419-500, 505-582, and 593-676; these read PHIQ…DTVQ, PKLE…VFLQ, PEPS…LDVQ, PKKV…VALN, PRDV…QTAS, and PRRL…STLT. Cysteine 161 and cysteine 219 are oxidised to a cystine. 2 disulfide bridges follow: cysteine 265–cysteine 309 and cysteine 353–cysteine 396. Residues asparagine 363, asparagine 428, asparagine 445, asparagine 448, and asparagine 479 are each glycosylated (N-linked (GlcNAc...) asparagine). Cystine bridges form between cysteine 442–cysteine 484 and cysteine 529–cysteine 571. 2 N-linked (GlcNAc...) asparagine glycosylation sites follow: asparagine 574 and asparagine 634. A disulfide bond links cysteine 616 and cysteine 659. A helical transmembrane segment spans residues 688–708; that stretch reads VAVGFGSCLAILILAICGLKL. Topologically, residues 709 to 847 are cytoplasmic; the sequence is QRRWKRTQSQ…ENVDYVILKH (139 aa). Phosphoserine occurs at positions 725, 726, and 729. 2 consecutive short sequence motifs (ITIM motif) follow at residues 760–765 and 794–799; these read ISYTTL and VTYSVL. At tyrosine 762 the chain carries Phosphotyrosine. Residues tyrosine 807, tyrosine 822, and tyrosine 842 each carry the phosphotyrosine modification. Short sequence motifs (ITIM motif) lie at residues 820-825 and 840-845; these read IHYSEL and VDYVIL.

It belongs to the immunoglobulin superfamily. SIGLEC (sialic acid binding Ig-like lectin) family. As to quaternary structure, predominantly monomer of isoform CD22-beta. Also found as heterodimer of isoform CD22-beta and a shorter isoform. Interacts with PTPN6/SHP-1, LYN, SYK, PIK3R1/PIK3R2 and PLCG1 upon phosphorylation. Interacts with GRB2, INPP5D and SHC1 upon phosphorylation. May form a complex with INPP5D/SHIP, GRB2 and SHC1. Phosphorylation of Tyr-762, Tyr-807 and Tyr-822 are involved in binding to SYK, GRB2 and SYK, respectively. Phosphorylation of Tyr-842 is involved in binding to SYK, PLCG2 and PIK3R1/PIK3R2. Post-translationally, phosphorylated on tyrosine residues by LYN.

It is found in the cell membrane. Functionally, most highly expressed siglec (sialic acid-binding immunoglobulin-like lectin) on B-cells that plays a role in various aspects of B-cell biology including differentiation, antigen presentation, and trafficking to bone marrow. Binds to alpha 2,6-linked sialic acid residues of surface molecules such as CD22 itself, CD45 and IgM in a cis configuration. Can also bind to ligands on other cells as an adhesion molecule in a trans configuration. Acts as an inhibitory coreceptor on the surface of B-cells and inhibits B-cell receptor induced signaling, characterized by inhibition of the calcium mobilization and cellular activation. Mechanistically, the immunoreceptor tyrosine-based inhibitory motif domain is phosphorylated by the Src kinase LYN, which in turn leads to the recruitment of the protein tyrosine phosphatase 1/PTPN6, leading to the negative regulation of BCR signaling. If this negative signaling from is of sufficient strength, apoptosis of the B-cell can be induced. The protein is B-cell receptor CD22 of Pan troglodytes (Chimpanzee).